Reading from the N-terminus, the 700-residue chain is Peroxisomal acyl-coenzyme A oxidase 3 (700 aa).

Residue Ala2 is modified to N-acetylalanine. A Phosphothreonine modification is found at Thr281. Positions Ser698–Leu700 match the Microbody targeting signal motif.

This sequence belongs to the acyl-CoA oxidase family. It depends on FAD as a cofactor.

It is found in the peroxisome. It catalyses the reaction a 2,3-saturated acyl-CoA + O2 = a (2E)-enoyl-CoA + H2O2. The catalysed reaction is (2S)-pristanoyl-CoA + O2 = (2E)-pristenoyl-CoA + H2O2. The enzyme catalyses tetracosanoyl-CoA + O2 = (2E)-tetracosenoyl-CoA + H2O2. It carries out the reaction hexadecanoyl-CoA + O2 = (2E)-hexadecenoyl-CoA + H2O2. It catalyses the reaction hexadecanedioyl-CoA + O2 = (2E)-hexadecenedioyl-CoA + H2O2. It participates in lipid metabolism; peroxisomal fatty acid beta-oxidation. Functionally, oxidizes the CoA-esters of 2-methyl-branched fatty acids. This Homo sapiens (Human) protein is Peroxisomal acyl-coenzyme A oxidase 3 (ACOX3).